The sequence spans 57 residues: DNA gyrase inhibitor YacG (57 aa).

Zn(2+)-binding residues include Cys-5, Cys-8, Cys-20, and Cys-24.

It belongs to the DNA gyrase inhibitor YacG family. Interacts with GyrB. Zn(2+) is required as a cofactor.

Functionally, inhibits all the catalytic activities of DNA gyrase by preventing its interaction with DNA. Acts by binding directly to the C-terminal domain of GyrB, which probably disrupts DNA binding by the gyrase. This is DNA gyrase inhibitor YacG from Caulobacter vibrioides (strain ATCC 19089 / CIP 103742 / CB 15) (Caulobacter crescentus).